We begin with the raw amino-acid sequence, 514 residues long: Peptide chain release factor 3 (514 aa).

The region spanning 8–268 (KKRRTFAIIS…TFLEFAPEPH (261 aa)) is the tr-type G domain. GTP-binding positions include 17-24 (SHPDAGKT), 85-89 (DTPGH), and 139-142 (NKLD).

The protein belongs to the TRAFAC class translation factor GTPase superfamily. Classic translation factor GTPase family. PrfC subfamily.

It is found in the cytoplasm. Increases the formation of ribosomal termination complexes and stimulates activities of RF-1 and RF-2. It binds guanine nucleotides and has strong preference for UGA stop codons. It may interact directly with the ribosome. The stimulation of RF-1 and RF-2 is significantly reduced by GTP and GDP, but not by GMP. The polypeptide is Peptide chain release factor 3 (Streptococcus pyogenes serotype M5 (strain Manfredo)).